The sequence spans 142 residues: Small ribosomal subunit protein uS12 (142 aa).

Residues 1 to 44 form a disordered region; sequence MTNGKYAARKLKKDRQQRRWSDSEYARRERGLGKKSDPLEGAPQ. Basic residues predominate over residues 7–16; sequence AARKLKKDRQ. Residues 17-38 are compositionally biased toward basic and acidic residues; sequence QRRWSDSEYARRERGLGKKSDP.

It belongs to the universal ribosomal protein uS12 family. As to quaternary structure, part of the 30S ribosomal subunit.

In terms of biological role, with S4 and S5 plays an important role in translational accuracy. Located at the interface of the 30S and 50S subunits. The polypeptide is Small ribosomal subunit protein uS12 (Halobacterium salinarum (strain ATCC 29341 / DSM 671 / R1)).